A 384-amino-acid polypeptide reads, in one-letter code: Protein V (384 aa).

Disordered regions lie at residues M1–E23 and S38–H318. Basic and acidic residues predominate over residues I7–G20. Over residues L50–G59 the composition is skewed to polar residues. The residue at position 68 (S68) is a Phosphoserine; by host. Basic and acidic residues predominate over residues R83–A101. At S125 the chain carries Phosphoserine; by host. Basic and acidic residues predominate over residues G150–D168. A compositionally biased stretch (polar residues) spans A191 to A206. Residues S192, S249, S257, and S260 each carry the phosphoserine; by host modification. The Zn(2+) site is built by H318, C337, C341, C353, C355, C358, C362, and C365.

This sequence belongs to the paramyxoviruses V protein family. Interacts with host IFIH1/MDA5 and DHX58/LGP2. Interacts with host IRF3. Interacts with host RIGI regulatory protein (via CARDs domain) and host TRIM25 (via SPRY domain); these interactions prevent TRIM25-mediated ubiquitination of RIG-I and disrupts downstream RIG-I signaling.

Its subcellular location is the host cytoplasm. Plays an essential role in the inhibition of host immune response. Prevents the establishment of cellular antiviral state by blocking interferon-alpha/beta (IFN-alpha/beta) production and signaling pathway. Interacts with host IFIH1/MDA5 and DHX58/LGP2 to inhibit the transduction pathway involved in the activation of IFN-beta promoter, thus protecting the virus against cell antiviral state. Also interacts with and inhibits host IRF3. Blocks the type I interferon signaling pathway by disrupting the RIG-I signaling pathway. The protein is Protein V (P/V/C) of Sendai virus (strain Harris) (SeV).